The primary structure comprises 120 residues: MITKTSKNAARLKRHARVRAKLSGTPERPRLNVFRSNKHIYAQVIDDVNGVTLVSASTLDKDFNAENGSDTAAAAKVGELVAKRASEKGITNVVFDRGGYLYHGRVKALADAAREAGLEF.

It belongs to the universal ribosomal protein uL18 family. Part of the 50S ribosomal subunit; part of the 5S rRNA/L5/L18/L25 subcomplex. Contacts the 5S and 23S rRNAs.

Its function is as follows. This is one of the proteins that bind and probably mediate the attachment of the 5S RNA into the large ribosomal subunit, where it forms part of the central protuberance. This is Large ribosomal subunit protein uL18 from Bacillus licheniformis (strain ATCC 14580 / DSM 13 / JCM 2505 / CCUG 7422 / NBRC 12200 / NCIMB 9375 / NCTC 10341 / NRRL NRS-1264 / Gibson 46).